Here is a 431-residue protein sequence, read N- to C-terminus: Beta-lactamase hydrolase-like protein (431 aa).

His-212, His-214, and His-286 together coordinate Zn(2+). Asp-309 provides a ligand contact to substrate.

Belongs to the metallo-beta-lactamase superfamily. The cofactor is Zn(2+).

Could play a role in cell adherence or biofilm development. This is Beta-lactamase hydrolase-like protein from Xylella fastidiosa (strain 9a5c).